Here is a 351-residue protein sequence, read N- to C-terminus: Ribosomal RNA large subunit methyltransferase M (351 aa).

S-adenosyl-L-methionine is bound by residues S186, 219–222 (APGG), D238, D258, and D274. K303 (proton acceptor) is an active-site residue.

It belongs to the class I-like SAM-binding methyltransferase superfamily. RNA methyltransferase RlmE family. RlmM subfamily. In terms of assembly, monomer.

It localises to the cytoplasm. The enzyme catalyses cytidine(2498) in 23S rRNA + S-adenosyl-L-methionine = 2'-O-methylcytidine(2498) in 23S rRNA + S-adenosyl-L-homocysteine + H(+). In terms of biological role, catalyzes the 2'-O-methylation at nucleotide C2498 in 23S rRNA. In Xylella fastidiosa (strain M12), this protein is Ribosomal RNA large subunit methyltransferase M.